A 364-amino-acid polypeptide reads, in one-letter code: Probable dual-specificity RNA methyltransferase RlmN (364 aa).

E107 serves as the catalytic Proton acceptor. One can recognise a Radical SAM core domain in the interval 113–346; sequence HEYGNSVCVT…ATIRREQGSD (234 aa). A disulfide bridge connects residues C120 and C351. C127, C131, and C134 together coordinate [4Fe-4S] cluster. S-adenosyl-L-methionine contacts are provided by residues 177-178, S209, 232-234, and N308; these read GE and SLH. C351 acts as the S-methylcysteine intermediate in catalysis.

Belongs to the radical SAM superfamily. RlmN family. [4Fe-4S] cluster serves as cofactor.

Its subcellular location is the cytoplasm. The catalysed reaction is adenosine(2503) in 23S rRNA + 2 reduced [2Fe-2S]-[ferredoxin] + 2 S-adenosyl-L-methionine = 2-methyladenosine(2503) in 23S rRNA + 5'-deoxyadenosine + L-methionine + 2 oxidized [2Fe-2S]-[ferredoxin] + S-adenosyl-L-homocysteine. The enzyme catalyses adenosine(37) in tRNA + 2 reduced [2Fe-2S]-[ferredoxin] + 2 S-adenosyl-L-methionine = 2-methyladenosine(37) in tRNA + 5'-deoxyadenosine + L-methionine + 2 oxidized [2Fe-2S]-[ferredoxin] + S-adenosyl-L-homocysteine. Specifically methylates position 2 of adenine 2503 in 23S rRNA and position 2 of adenine 37 in tRNAs. Confers resistance to some classes of antibiotics. The polypeptide is Probable dual-specificity RNA methyltransferase RlmN (Staphylococcus epidermidis (strain ATCC 35984 / DSM 28319 / BCRC 17069 / CCUG 31568 / BM 3577 / RP62A)).